The sequence spans 278 residues: ADP-dependent (S)-NAD(P)H-hydrate dehydratase (278 aa).

One can recognise a YjeF C-terminal domain in the interval 4-276 (DDDLVRQVIR…KAIPSWMKKL (273 aa)). Residues Ala39, Gly102, and His152 each coordinate (6S)-NADPHX. Gly216 lines the AMP pocket. Asp217 contacts (6S)-NADPHX.

Belongs to the NnrD/CARKD family. As to quaternary structure, homotetramer. Mg(2+) serves as cofactor.

The enzyme catalyses (6S)-NADHX + ADP = AMP + phosphate + NADH + H(+). The catalysed reaction is (6S)-NADPHX + ADP = AMP + phosphate + NADPH + H(+). In terms of biological role, catalyzes the dehydration of the S-form of NAD(P)HX at the expense of ADP, which is converted to AMP. Together with NAD(P)HX epimerase, which catalyzes the epimerization of the S- and R-forms, the enzyme allows the repair of both epimers of NAD(P)HX, a damaged form of NAD(P)H that is a result of enzymatic or heat-dependent hydration. The polypeptide is ADP-dependent (S)-NAD(P)H-hydrate dehydratase (Streptococcus thermophilus).